The primary structure comprises 343 residues: Protein RecA (343 aa).

Gly64–Thr71 lines the ATP pocket.

This sequence belongs to the RecA family.

The protein localises to the cytoplasm. Its function is as follows. Can catalyze the hydrolysis of ATP in the presence of single-stranded DNA, the ATP-dependent uptake of single-stranded DNA by duplex DNA, and the ATP-dependent hybridization of homologous single-stranded DNAs. It interacts with LexA causing its activation and leading to its autocatalytic cleavage. This Bacillus thuringiensis (strain Al Hakam) protein is Protein RecA.